A 171-amino-acid polypeptide reads, in one-letter code: Peptide deformylase (171 aa).

Fe cation contacts are provided by C94 and H136. Residue E137 is part of the active site. H140 is a Fe cation binding site.

The protein belongs to the polypeptide deformylase family. Fe(2+) serves as cofactor.

It catalyses the reaction N-terminal N-formyl-L-methionyl-[peptide] + H2O = N-terminal L-methionyl-[peptide] + formate. Functionally, removes the formyl group from the N-terminal Met of newly synthesized proteins. Requires at least a dipeptide for an efficient rate of reaction. N-terminal L-methionine is a prerequisite for activity but the enzyme has broad specificity at other positions. The sequence is that of Peptide deformylase from Afipia carboxidovorans (strain ATCC 49405 / DSM 1227 / KCTC 32145 / OM5) (Oligotropha carboxidovorans).